Reading from the N-terminus, the 245-residue chain is UPF0246 protein Ldb2075 (245 aa).

The protein belongs to the UPF0246 family.

The sequence is that of UPF0246 protein Ldb2075 from Lactobacillus delbrueckii subsp. bulgaricus (strain ATCC 11842 / DSM 20081 / BCRC 10696 / JCM 1002 / NBRC 13953 / NCIMB 11778 / NCTC 12712 / WDCM 00102 / Lb 14).